The sequence spans 967 residues: uncharacterized protein (967 aa).

Residues 1 to 29 (MKKKLKSVLIWFLIFTFNLSLGSFREVFA) form the signal peptide. 2 consecutive BIG2 domains span residues 38–107 (TAIT…QDGS) and 133–190 (LPVG…VNDG).

This is an uncharacterized protein from Clostridium acetobutylicum (strain ATCC 824 / DSM 792 / JCM 1419 / IAM 19013 / LMG 5710 / NBRC 13948 / NRRL B-527 / VKM B-1787 / 2291 / W).